Here is a 364-residue protein sequence, read N- to C-terminus: MAQQTPLYEQHTLCGARMVDFHGWMMPLHYGSQLDEHHAVRTDAGMFDVSHMTIVDLHGSRTREFLRYLLANDVAKLTKTGKALYSGMLNASGGVIDDLIVYYFTEDFFRLVVNSATREKDLSWITQHAEPYAIDITVRDDLSLIAVQGPNAQEKAATLFTDEQRHAVEGMKPFFGVQAGDLFIATTGYTGEAGYEIAMPNEKAADFWRALVEAGVKPCGLGARDTLRLEAGMNLYGQEMDEGISPLAANMGWTIAWEPADRDFIGREALEMQREKGHEQLVGLVMTEKGVLRNELPVRFTDAQGNQQEGIITSGTFSPTLGYSIALARVPAGIGETAIVQIRNREMPVKVTKPVFVRNGKAVA.

It belongs to the GcvT family. In terms of assembly, the glycine cleavage system is composed of four proteins: P, T, L and H.

The enzyme catalyses N(6)-[(R)-S(8)-aminomethyldihydrolipoyl]-L-lysyl-[protein] + (6S)-5,6,7,8-tetrahydrofolate = N(6)-[(R)-dihydrolipoyl]-L-lysyl-[protein] + (6R)-5,10-methylene-5,6,7,8-tetrahydrofolate + NH4(+). The glycine cleavage system catalyzes the degradation of glycine. The polypeptide is Aminomethyltransferase (Salmonella paratyphi C (strain RKS4594)).